Here is a 155-residue protein sequence, read N- to C-terminus: SsrA-binding protein (155 aa).

It belongs to the SmpB family.

The protein resides in the cytoplasm. In terms of biological role, required for rescue of stalled ribosomes mediated by trans-translation. Binds to transfer-messenger RNA (tmRNA), required for stable association of tmRNA with ribosomes. tmRNA and SmpB together mimic tRNA shape, replacing the anticodon stem-loop with SmpB. tmRNA is encoded by the ssrA gene; the 2 termini fold to resemble tRNA(Ala) and it encodes a 'tag peptide', a short internal open reading frame. During trans-translation Ala-aminoacylated tmRNA acts like a tRNA, entering the A-site of stalled ribosomes, displacing the stalled mRNA. The ribosome then switches to translate the ORF on the tmRNA; the nascent peptide is terminated with the 'tag peptide' encoded by the tmRNA and targeted for degradation. The ribosome is freed to recommence translation, which seems to be the essential function of trans-translation. This chain is SsrA-binding protein, found in Oenococcus oeni (strain ATCC BAA-331 / PSU-1).